The following is a 122-amino-acid chain: Ribosome-binding factor A (122 aa).

The protein belongs to the RbfA family. As to quaternary structure, monomer. Binds 30S ribosomal subunits, but not 50S ribosomal subunits or 70S ribosomes.

It localises to the cytoplasm. Its function is as follows. One of several proteins that assist in the late maturation steps of the functional core of the 30S ribosomal subunit. Associates with free 30S ribosomal subunits (but not with 30S subunits that are part of 70S ribosomes or polysomes). Required for efficient processing of 16S rRNA. May interact with the 5'-terminal helix region of 16S rRNA. In Polynucleobacter necessarius subsp. necessarius (strain STIR1), this protein is Ribosome-binding factor A.